The primary structure comprises 417 residues: Hydroxysqualene dehydroxylase (417 aa).

It belongs to the HpnE family.

The enzyme catalyses squalene + FAD + H2O + H(+) = hydroxysqualene + FADH2. It participates in secondary metabolite biosynthesis; hopanoid biosynthesis. In terms of biological role, involved in the biosynthesis of the hopanoid precursor squalene (SQ) from farnesyl diphosphate (FPP). Catalyzes the third (last) step, the reduction of hydroxysqualene (HSQ) to SQ. The polypeptide is Hydroxysqualene dehydroxylase (Sinorhizobium fredii (strain NBRC 101917 / NGR234)).